A 477-amino-acid chain; its full sequence is RTX-III toxin determinant D (477 aa).

Residues 1–59 (MKLWILGLGEFFQRYRNIWREIWKIRKQLDTPARQKDENEFLPRHLELIETPISKKPRL) are Cytoplasmic-facing. The helical transmembrane segment at 60–77 (IAYLIMLFLFLAIVISII) threads the bilayer. The Periplasmic portion of the chain corresponds to 78–477 (SKVEIVASAT…ESITESLRER (400 aa)).

Belongs to the membrane fusion protein (MFP) (TC 8.A.1) family.

It is found in the cell inner membrane. Functionally, involved in the transport of the toxin RTX-III. The protein is RTX-III toxin determinant D (apxIIID) of Actinobacillus pleuropneumoniae (Haemophilus pleuropneumoniae).